The sequence spans 313 residues: tRNA dimethylallyltransferase (313 aa).

ATP is bound at residue 11–18; sequence GPTAGGKT. Residue 13-18 coordinates substrate; that stretch reads TAGGKT. 3 interaction with substrate tRNA regions span residues 36 to 39, 160 to 164, and 243 to 248; these read DSAL, QRIGR, and RCVGYR.

This sequence belongs to the IPP transferase family. Monomer. Mg(2+) is required as a cofactor.

The enzyme catalyses adenosine(37) in tRNA + dimethylallyl diphosphate = N(6)-dimethylallyladenosine(37) in tRNA + diphosphate. Catalyzes the transfer of a dimethylallyl group onto the adenine at position 37 in tRNAs that read codons beginning with uridine, leading to the formation of N6-(dimethylallyl)adenosine (i(6)A). This is tRNA dimethylallyltransferase from Neisseria meningitidis serogroup A / serotype 4A (strain DSM 15465 / Z2491).